We begin with the raw amino-acid sequence, 355 residues long: Isopentenyl-diphosphate delta-isomerase (355 aa).

12-13 contributes to the substrate binding site; it reads RK. Residues S70, 71 to 73, S101, and N130 each bind FMN; that span reads SMT. Position 101 to 103 (101 to 103) interacts with substrate; that stretch reads SMR. Q165 lines the substrate pocket. E166 is a Mg(2+) binding site. FMN is bound by residues K197 and 308–309; that span reads AG.

It belongs to the IPP isomerase type 2 family. As to quaternary structure, homooctamer. Dimer of tetramers. The cofactor is FMN. NADPH is required as a cofactor. It depends on Mg(2+) as a cofactor.

It localises to the cytoplasm. It carries out the reaction isopentenyl diphosphate = dimethylallyl diphosphate. Involved in the biosynthesis of isoprenoids. Catalyzes the 1,3-allylic rearrangement of the homoallylic substrate isopentenyl (IPP) to its allylic isomer, dimethylallyl diphosphate (DMAPP). This is Isopentenyl-diphosphate delta-isomerase from Chlorobium phaeovibrioides (strain DSM 265 / 1930) (Prosthecochloris vibrioformis (strain DSM 265)).